The sequence spans 264 residues: Proteasome subunit beta type-4 (264 aa).

M1 bears the N-acetylmethionine mark. The propeptide occupies 1–45 (MEAFLGSRSGLWAGGPAPGQFYRIPSTPDSFMDPASALYRGPITR). Position 26 is a phosphoserine (S26). Y102 is modified (phosphotyrosine).

Belongs to the peptidase T1B family. The 26S proteasome consists of a 20S proteasome core and two 19S regulatory subunits. The 20S proteasome core is a barrel-shaped complex made of 28 subunits that are arranged in four stacked rings. The two outer rings are each formed by seven alpha subunits, and the two inner rings are formed by seven beta subunits. The proteolytic activity is exerted by three beta-subunits PSMB5, PSMB6 and PSMB7. Forms a ternary complex with SMAD1 and OAZ1 before PSMB4 is incorporated into the 20S proteasome. Interacts with PRPF19. As to quaternary structure, (Microbial infection) Interacts with HTLV-1 Tax protein. In terms of assembly, (Microbial infection) Interacts with HIV-1 Nef and Tat proteins.

The protein resides in the cytoplasm. The protein localises to the nucleus. Non-catalytic component of the 20S core proteasome complex involved in the proteolytic degradation of most intracellular proteins. This complex plays numerous essential roles within the cell by associating with different regulatory particles. Associated with two 19S regulatory particles, forms the 26S proteasome and thus participates in the ATP-dependent degradation of ubiquitinated proteins. The 26S proteasome plays a key role in the maintenance of protein homeostasis by removing misfolded or damaged proteins that could impair cellular functions, and by removing proteins whose functions are no longer required. Associated with the PA200 or PA28, the 20S proteasome mediates ubiquitin-independent protein degradation. This type of proteolysis is required in several pathways including spermatogenesis (20S-PA200 complex) or generation of a subset of MHC class I-presented antigenic peptides (20S-PA28 complex). SMAD1/OAZ1/PSMB4 complex mediates the degradation of the CREBBP/EP300 repressor SNIP1. The chain is Proteasome subunit beta type-4 from Homo sapiens (Human).